A 105-amino-acid chain; its full sequence is Saimiri transformation-associated protein (105 aa).

Topologically, residues 1–75 (MASEPNLRYP…GPPGPSGLPG (75 aa)) are cytoplasmic. A disordered region spans residues 1–75 (MASEPNLRYP…GPPGPSGLPG (75 aa)). Residues 15 to 74 (GDRGPQGPPGPPGPQGPPGPQGPPGPQGPPGPQGPPGPQGPPGPQGPPGPPGPPGPSGLP) form the Collagen-like domain. Residues 20-71 (QGPPGPPGPQGPPGPQGPPGPQGPPGPQGPPGPQGPPGPQGPPGPPGPPGPS) show a composition bias toward pro residues. A helical membrane pass occupies residues 76-96 (LFVTNLLLGIIILLLLIIVAI). The Extracellular portion of the chain corresponds to 97–105 (LLVSKLVVN).

Binds to host RAS and TRAF2.

It localises to the host membrane. Its function is as follows. Acts synergistically with Tip to stimulate NF-kappa-B activity and interleukin-2 gene expression by binding to host TRAF proteins. Activation of NF-kappa-B protects lymphocytes from apoptosis, thereby facilitating viral induced cell transformation. This chain is Saimiri transformation-associated protein, found in Saimiriine herpesvirus 2 (strain 484-77) (SaHV-2).